Here is a 160-residue protein sequence, read N- to C-terminus: Probable chemoreceptor glutamine deamidase CheD (160 aa).

Belongs to the CheD family.

The enzyme catalyses L-glutaminyl-[protein] + H2O = L-glutamyl-[protein] + NH4(+). Functionally, probably deamidates glutamine residues to glutamate on methyl-accepting chemotaxis receptors (MCPs), playing an important role in chemotaxis. The protein is Probable chemoreceptor glutamine deamidase CheD of Desulfitobacterium hafniense (strain DSM 10664 / DCB-2).